The primary structure comprises 476 residues: Neuropeptide receptor 18 (476 aa).

Residues 1-61 are Extracellular-facing; that stretch reads MSSFYNEAKF…LSNHDNSSLM (61 aa). N-linked (GlcNAc...) asparagine glycosylation is found at asparagine 43 and asparagine 57. The helical transmembrane segment at 62–82 threads the bilayer; sequence LIAGFYALLFMFGTCGNAAIL. At 83 to 102 the chain is on the cytoplasmic side; that stretch reads AVVHHVKGQDPRSRHNTTLT. A helical transmembrane segment spans residues 103–123; that stretch reads YICILSIVDFLSMLPIPMTII. Topologically, residues 124 to 139 are extracellular; that stretch reads DQILGFWMFDTFACKL. A disulfide bond links cysteine 137 and cysteine 228. The helical transmembrane segment at 140–160 threads the bilayer; it reads FRLLEHIGKIFSTFILVAFSI. The Cytoplasmic portion of the chain corresponds to 161–179; sequence DRYCAVCHPLQVRVRNQRT. Residues 180–200 traverse the membrane as a helical segment; sequence VFVFLGIMFFVTCVMLSPILL. The Extracellular portion of the chain corresponds to 201-236; sequence YAHSKELVMHEKVDLDQEVITRMHLYKCVDDLGREL. A helical transmembrane segment spans residues 237–257; that stretch reads FVVFTLYSFVLAYLMPLLFMI. Topologically, residues 258-291 are cytoplasmic; the sequence is YFYYEMLIRLFKQANVIKQTLVGRRSGGEEKKLT. Residues 292 to 312 form a helical membrane-spanning segment; sequence IPVGHIAIYTLAICSFHFICW. Residues 313 to 334 lie on the Extracellular side of the membrane; that stretch reads TPYWISILYSLYEELYQDTKST. A helical transmembrane segment spans residues 335–355; the sequence is ASPPTYAFIYFMYGVHALPYI. The Cytoplasmic segment spans residues 356 to 476; it reads NSASNFILYG…ITPDTESVIL (121 aa).

It belongs to the G-protein coupled receptor 1 family. Expressed in sensory neurons including ASER.

Its subcellular location is the cell membrane. In terms of biological role, probable receptor for neuropeptide ligand nlp-9 that plays a role in octopamine signaling and specifically, the octapamine inhibition of aversion responses in olfactory sensory neurons. In AWB olfactory sensory neurons, required for the detection of preferred food sources. This chain is Neuropeptide receptor 18, found in Caenorhabditis elegans.